Here is a 584-residue protein sequence, read N- to C-terminus: uncharacterized protein (584 aa).

Residues 353 to 375 are compositionally biased toward polar residues; it reads NSEGQTNAETSLNGKGTVGNQWA. 3 disordered regions span residues 353–379, 400–426, and 463–565; these read NSEG…SPPE, LESK…VSSH, and SVDS…CNSG. Positions 502–511 are enriched in polar residues; that stretch reads KANSPASSRL. Residues 516–535 are compositionally biased toward basic and acidic residues; it reads DSSHLSKHVNFDKNPDHSEA.

This is an uncharacterized protein from Mus musculus (Mouse).